The primary structure comprises 1315 residues: Probable nucleoporin C890.06 (1315 aa).

The protein belongs to the non-repetitive/WGA-negative nucleoporin family.

The protein resides in the cytoplasm. Its subcellular location is the nucleus. This Schizosaccharomyces pombe (strain 972 / ATCC 24843) (Fission yeast) protein is Probable nucleoporin C890.06.